We begin with the raw amino-acid sequence, 117 residues long: Large ribosomal subunit protein eL18 (117 aa).

The protein belongs to the eukaryotic ribosomal protein eL18 family.

This is Large ribosomal subunit protein eL18 from Halobacterium salinarum (strain ATCC 29341 / DSM 671 / R1).